Reading from the N-terminus, the 331-residue chain is Putative phosphoribosylaminoimidazole-succinocarboxamide synthase (331 aa).

The protein belongs to the SAICAR synthetase family. Highly divergent.

The enzyme catalyses 5-amino-1-(5-phospho-D-ribosyl)imidazole-4-carboxylate + L-aspartate + ATP = (2S)-2-[5-amino-1-(5-phospho-beta-D-ribosyl)imidazole-4-carboxamido]succinate + ADP + phosphate + 2 H(+). It functions in the pathway purine metabolism; IMP biosynthesis via de novo pathway; 5-amino-1-(5-phospho-D-ribosyl)imidazole-4-carboxamide from 5-amino-1-(5-phospho-D-ribosyl)imidazole-4-carboxylate: step 1/2. In Archaeoglobus fulgidus (strain ATCC 49558 / DSM 4304 / JCM 9628 / NBRC 100126 / VC-16), this protein is Putative phosphoribosylaminoimidazole-succinocarboxamide synthase (purC).